The following is a 644-amino-acid chain: ATP-dependent zinc metalloprotease FtsH (644 aa).

Residues 1-13 (MANNDNKHRRSMS) lie on the Cytoplasmic side of the membrane. A helical membrane pass occupies residues 14–34 (MLLYIAVAIFVYLLLSNTLLP). Over 35 to 117 (GLLRQQIQTV…SIPDNSANML (83 aa)) the chain is Extracellular. The chain crosses the membrane as a helical span at residues 118–138 (MYALIQYGIPLIIFLGIGFFI). Residues 139 to 644 (NRSLKRAMGD…DEGSSTPSEE (506 aa)) are Cytoplasmic-facing. 224-231 (GPPGTGKT) contacts ATP. His445 provides a ligand contact to Zn(2+). Glu446 is an active-site residue. Zn(2+) is bound by residues His449 and Asp522.

In the central section; belongs to the AAA ATPase family. It in the C-terminal section; belongs to the peptidase M41 family. Homohexamer. It depends on Zn(2+) as a cofactor.

It is found in the cell membrane. Functionally, acts as a processive, ATP-dependent zinc metallopeptidase for both cytoplasmic and membrane proteins. Plays a role in the quality control of integral membrane proteins. The protein is ATP-dependent zinc metalloprotease FtsH of Lancefieldella parvula (strain ATCC 33793 / DSM 20469 / CCUG 32760 / JCM 10300 / KCTC 3663 / VPI 0546 / 1246) (Atopobium parvulum).